The sequence spans 357 residues: Thiamine thiazole synthase, chloroplastic (357 aa).

Substrate-binding positions include Ala-102, Glu-123 to Gln-124, Gly-131, and Val-196. Position 233 is a 2,3-didehydroalanine (Cys) (Cys-233). Substrate contacts are provided by residues Asp-235, His-250, Met-304, and Arg-314–Gly-316.

Belongs to the THI4 family. Homooctamer. Fe cation serves as cofactor. During the catalytic reaction, a sulfide is transferred from Cys-233 to a reaction intermediate, generating a dehydroalanine residue.

It is found in the plastid. Its subcellular location is the chloroplast. It catalyses the reaction [ADP-thiazole synthase]-L-cysteine + glycine + NAD(+) = [ADP-thiazole synthase]-dehydroalanine + ADP-5-ethyl-4-methylthiazole-2-carboxylate + nicotinamide + 3 H2O + 2 H(+). Its function is as follows. Involved in biosynthesis of the thiamine precursor thiazole. Catalyzes the conversion of NAD and glycine to adenosine diphosphate 5-(2-hydroxyethyl)-4-methylthiazole-2-carboxylic acid (ADT), an adenylated thiazole intermediate. The reaction includes an iron-dependent sulfide transfer from a conserved cysteine residue of the protein to a thiazole intermediate. The enzyme can only undergo a single turnover, which suggests it is a suicide enzyme. May have additional roles in adaptation to various stress conditions and in DNA damage tolerance. This Chlamydomonas reinhardtii (Chlamydomonas smithii) protein is Thiamine thiazole synthase, chloroplastic.